The sequence spans 138 residues: Basic phospholipase A2 chain HDP-2P (138 aa).

Residues 1–16 (MRILWIVAVCLIGVEG) form the signal peptide. Cystine bridges form between Cys42-Cys131, Cys44-Cys60, Cys59-Cys111, Cys65-Cys138, Cys66-Cys104, Cys73-Cys97, and Cys91-Cys102. 3 residues coordinate Ca(2+): Tyr43, Gly45, and Gly47. Residue His63 is part of the active site. Asp64 contacts Ca(2+). Residue Asp105 is part of the active site.

As to quaternary structure, heterodimer of an acidic and a basic chain; non-covalently linked. The toxic basic protein has phospholipase A2 activity (chain HDP-2P) and the non-toxic acidic protein functions as its inhibitor (chain HPD-1I (AC A4VBF0)). It depends on Ca(2+) as a cofactor. Expressed by the venom gland.

Its subcellular location is the secreted. The enzyme catalyses a 1,2-diacyl-sn-glycero-3-phosphocholine + H2O = a 1-acyl-sn-glycero-3-phosphocholine + a fatty acid + H(+). Its activity is regulated as follows. Enzymatic activity and neurotoxicity are inhibited by Triton X-100. Triton X-100 has been determined to be located in the center of the hydrophobic channel of the enzyme. In terms of biological role, monomer: snake venom phospholipase A2 (PLA2) that affects neuromuscular transmission presynaptically. It has catalytic activity, anticoagulant activity and weakly inhibits ADP-induced platelet aggregation. PLA2 catalyzes the calcium-dependent hydrolysis of the 2-acyl groups in 3-sn-phosphoglycerides. Its function is as follows. Heterodimer: shows the same activities as the monomer, but with a lower potency. In Vipera nikolskii (Nikolsky's adder), this protein is Basic phospholipase A2 chain HDP-2P.